The sequence spans 205 residues: Max-like protein homolog 2 (205 aa).

2 stretches are compositionally biased toward low complexity: residues 1-12 (MSRSRSAAASSS) and 26-40 (SASS…ATNS). The segment at 1-58 (MSRSRSAAASSSQKPDDMDLMSPDGSASSPSAPNTPATNSGGFSSDRKKATHLRCERQ) is disordered. Residues 45–58 (SDRKKATHLRCERQ) are compositionally biased toward basic and acidic residues. The basic motif stretch occupies residues 47-60 (RKKATHLRCERQRR). The bHLH domain occupies 47-101 (RKKATHLRCERQRREAINSGYSDLKDLIPQTTTSLGCKTTNAAILFRACDFMSQL). The interval 61–101 (EAINSGYSDLKDLIPQTTTSLGCKTTNAAILFRACDFMSQL) is helix-loop-helix motif. Positions 98–132 (MSQLKTDISDADKQLAQLNAQAAALEMIASEYEQM) form a coiled coil.

In terms of tissue distribution, widely expressed.

Its subcellular location is the nucleus. It is found in the cytoplasm. It localises to the mitochondrion. Functionally, transcription factor. Binds to the E box motif 5'-CACGTG-3', probably in a heterodimeric complex with mml-1. Involved in modulating longevity in response to TOR signaling, dietary restriction, the decline in protein homeostasis associated with normal aging, germline signaling and the insulin-like signaling pathway. Plays a role in autophagy. Involved in regulating migration of the ray 1 precursor cells in the male tail, acting in concert with Wnt and semaphorin signaling pathways. Regulates transcription of genes encoding extracellular matrix (ECM) components which may contribute to the substratum required for migration of the neighboring ray 1 precursor cells. Required for resistance to oxidative stress. Involved in promoting infection by the microsporidian pathogen N.parisii, probably acting independently of its canonical partner, mml-1. In Caenorhabditis elegans, this protein is Max-like protein homolog 2.